The following is a 114-amino-acid chain: uncharacterized protein (114 aa).

2 helical membrane-spanning segments follow: residues 9–29 (LAIF…SFWL) and 75–95 (LVHF…VAII).

It localises to the cell membrane. This is an uncharacterized protein from Mycoplasma pneumoniae (strain ATCC 29342 / M129 / Subtype 1) (Mycoplasmoides pneumoniae).